Here is a 459-residue protein sequence, read N- to C-terminus: RuvB-like helicase 1 (459 aa).

An ATP-binding site is contributed by 75–82; sequence GGPSTGKT.

Belongs to the RuvB family. In terms of assembly, may form heterododecamers with RVB2. Component of the SWR1 chromatin remodeling complex, the INO80 chromatin remodeling complex, and of the R2TP complex.

It localises to the nucleus. It catalyses the reaction ATP + H2O = ADP + phosphate + H(+). Functionally, DNA helicase which participates in several chromatin remodeling complexes, including the SWR1 and the INO80 complexes. The SWR1 complex mediates the ATP-dependent exchange of histone H2A for the H2A variant HZT1 leading to transcriptional regulation of selected genes by chromatin remodeling. The INO80 complex remodels chromatin by shifting nucleosomes and is involved in DNA repair. Also involved in pre-rRNA processing. In Eremothecium gossypii (strain ATCC 10895 / CBS 109.51 / FGSC 9923 / NRRL Y-1056) (Yeast), this protein is RuvB-like helicase 1 (RVB1).